Consider the following 166-residue polypeptide: Protein phosphatase 1 regulatory subunit 1A (166 aa).

Met-1 is subject to N-acetylmethionine. A disordered region spans residues 1 to 166; it reads MEQDNSPRKI…SQDSQGASAV (166 aa). Residues 9–12 are essential for activity; sequence KIQF. Residues 19–29 show a composition bias toward basic and acidic residues; the sequence is PHLDPEAAEQI. Thr-35 carries the phosphothreonine; by PKA modification. Residues 42–54 are essential for activity; it reads TSDQSSPEVDEDR. A phosphoserine mark is found at Ser-43, Ser-46, Ser-47, and Ser-67. Residues 104–114 are compositionally biased toward low complexity; it reads AAEGTGAQESQ. Basic and acidic residues predominate over residues 143–152; it reads AQERRGEEPS. The tract at residues 143–166 is interaction with PPP1R15A; it reads AQERRGEEPSTAKTSQDSQGASAV. The segment covering 153–166 has biased composition (polar residues); it reads TAKTSQDSQGASAV.

Belongs to the protein phosphatase inhibitor 1 family. Interacts with PPP1R15A. Post-translationally, phosphorylation of Thr-35 is required for activity.

Functionally, inhibitor of protein-phosphatase 1. This protein may be important in hormonal control of glycogen metabolism. Hormones that elevate intracellular cAMP increase I-1 activity in many tissues. I-1 activation may impose cAMP control over proteins that are not directly phosphorylated by PKA. Following a rise in intracellular calcium, I-1 is inactivated by calcineurin (or PP2B). Does not inhibit type-2 phosphatases. This chain is Protein phosphatase 1 regulatory subunit 1A (PPP1R1A), found in Oryctolagus cuniculus (Rabbit).